We begin with the raw amino-acid sequence, 506 residues long: MLPQLSIERASVFALGLIATGSLVVAGPCDIYSAGGTPCVAAHSTTRALYSSYSGPLYQVKRGSDGATADIAPLSAGGVANAAAQDSFCDGTTCLITIIYDQSGRGNHLTQAPPGGFSGPESNGYDNLASAIGAPVTLNGQKAYGVFISPGTGYRNNAASGTATGDAPEGMYAVLDGTHYNDACCFDYGNAETSSRDTGNGHMEAIYFGDNTIWGTGSGSGPWIMADLENGLFSGSSPDNNSGDPSISYRFLTAVVKGKQNQWAIRGANAASGSLSTFYNGARPSVSGYNPMSKEGAIILGIGGDNSNGAQGTFYEGVMTSGYPSDATENSVQANIVAAKYATASLTSGPKLTVGSSISLQATTPGYTTRYIAHSGSTVNTQVVSSSSSTTLKQQASWTVRTGLANSDCFSFESRDTPGSFLRHYNFVLQLSANDGTKQFHEDATFCPQAGLNGQGNSIRSWNYPTRYFRHYNNVLYAASNGGVHTFDATSSFNNDVSWVISTGFA.

Residues 1–26 (MLPQLSIERASVFALGLIATGSLVVA) form the signal peptide. Residues 27 to 343 (GPCDIYSAGG…ANIVAAKYAT (317 aa)) form a catalytic region. 3 disulfide bridges follow: C29–C39, C89–C94, and C184–C185. A substrate-binding site is contributed by D227. E229 functions as the Nucleophile in the catalytic mechanism. Position 230 (N230) interacts with substrate. Residue N240 is glycosylated (N-linked (GlcNAc...) asparagine). G304 serves as a coordination point for substrate. D305 (proton donor) is an active-site residue. Positions 344–506 (ASLTSGPKLT…VSWVISTGFA (163 aa)) are ABD. An intrachain disulfide couples C409 to C447. Positions 424, 426, 427, 443, 471, 476, and 496 each coordinate substrate.

It belongs to the glycosyl hydrolase 54 family.

The protein localises to the secreted. It carries out the reaction Hydrolysis of terminal non-reducing alpha-L-arabinofuranoside residues in alpha-L-arabinosides.. The protein operates within glycan metabolism; L-arabinan degradation. Alpha-L-arabinofuranosidase involved in the degradation of arabinoxylan, a major component of plant hemicellulose. Able to hydrolyze 1,5-, 1,3- and 1,2-alpha-linkages not only in L-arabinofuranosyl oligosaccharides, but also in polysaccharides containing terminal non-reducing L-arabinofuranoses in side chains, like L-arabinan, arabinogalactan and arabinoxylan. In Aspergillus fumigatus (strain ATCC MYA-4609 / CBS 101355 / FGSC A1100 / Af293) (Neosartorya fumigata), this protein is Probable alpha-L-arabinofuranosidase B (abfB).